We begin with the raw amino-acid sequence, 68 residues long: Large ribosomal subunit protein bL35 (68 aa).

Belongs to the bacterial ribosomal protein bL35 family.

The polypeptide is Large ribosomal subunit protein bL35 (Orientia tsutsugamushi (strain Boryong) (Rickettsia tsutsugamushi)).